Here is a 243-residue protein sequence, read N- to C-terminus: uncharacterized protein (243 aa).

The signal sequence occupies residues 1–19 (MDELALSFSLTCLLPENRA). The N-linked (GlcNAc...) asparagine glycan is linked to Asn-136.

It is found in the secreted. This is an uncharacterized protein from Homo sapiens (Human).